The primary structure comprises 437 residues: Na(+)/H(+) antiporter NhaA (437 aa).

11 helical membrane passes run 12-32 (SMNI…AVIA), 65-85 (LTMI…MVGL), 103-123 (ALPF…YSMV), 133-153 (GLAI…SLLG), 162-182 (IFLT…IAIF), 186-206 (HVAY…YFIG), 214-234 (IFFL…GIHS), 308-328 (GAVN…VMFS), 333-353 (VIGG…FLGI), 377-397 (ISGV…IANL), and 412-432 (LGVL…LHWV).

This sequence belongs to the NhaA Na(+)/H(+) (TC 2.A.33) antiporter family.

The protein resides in the cell inner membrane. The catalysed reaction is Na(+)(in) + 2 H(+)(out) = Na(+)(out) + 2 H(+)(in). Functionally, na(+)/H(+) antiporter that extrudes sodium in exchange for external protons. In Bacteroides fragilis (strain ATCC 25285 / DSM 2151 / CCUG 4856 / JCM 11019 / LMG 10263 / NCTC 9343 / Onslow / VPI 2553 / EN-2), this protein is Na(+)/H(+) antiporter NhaA.